We begin with the raw amino-acid sequence, 1627 residues long: MAKSGGGGGGGGGGGGGGGGSGGLTCVTLFDNQINASKKEESESVNKNDTSKKMSVERVYQKKTQLEHILLRPDTYIGSVEPLTQLMWVYDEDVGMNCREVTFVPGLYKIFDEILVNAADNKQRDKNMTCIKISIDPESNIISIWNNGKGIPVVEHKVEKVYVPALIFGQLLTSSNYDDDEKKVTGGRNGYGAKLCNIFSTKFTVETACKEYKHSFKQTWMNNMMKTSEPKIKHFEGDDYTCITFQPDLSKFKMENLDKDIVSLMTRRAYDLAGSCKGVKVMLNGKKLPVNGFRSYVDLYVKDKLDETGVALKVIHEVVNERWDVCLTLSEKGFQQISFVNSIATTKGGRHVDYVVDQVVGKLIEVVKKKNKAGVSVKPFQVKNHIWVFVNCLIENPSFDSQTKENMTLQPKSFGSKCQLSEKFFKAASNCGIIESILNWVKFKAQTQLNKKCSSVKHSKIKGIPKLDDANDAGGKHSLDCTLILTEGDSAKSLAVSGLGVIGRDRYGVFPLRGKILNVREASHKQIMENAEINNIIKIVGLQYKKSYEDPESLKSLRYGKIMIMTDQDQDGSHIKGLLINFIHHNWPSLLKHGFLEEFITPIVKASKNKQELSFYSIPEFDEWKKHMENHKAWKIKYYKGLGTSTAKEAKEYFADMERHRILFRYAGPEDDAAITLAFSKKKIDDRKEWLTNFMEDRRQRRLHGLPEQFLYGTATKHLTYNDFINKELILFSNSDNERSIPSLVDGLKPGQRKVLFTCFKRNDKREVKVAQLAGSVAEMSAYHHGEQALMMTIVNLAQNFVGSNNVNLLQPIGQFGTRLHGGKDAASPRYIFTMLSPLARLLFPSVDDNLLKFLYDDNQRVEPEWYIPIIPMVLVNGAEGIGTGWACKLPNYDTREIVNNVRRMLDGLDPHPMLPNYKNFRGTIQELGQNQYVVSGEIFVVDRNTVEITELPVRTWTQVYKEQVLEPMLNGTEKTPALISDYKEYHTDTTVKFVVKMTEEKLAQAEAAGLHKVFKLQTSLTCNSMVLFDHMGCLKKYETVQDILKEFFDLRLHYYSLRKEWLVGMLGAESTKLNNQARFILEKIQGKITIENRSKRDLIQMLVQRGYESDPVKAWKEAQEKAAEEEDPQNANDDASSASGSTSGPDFNYILNMSLWSLTKEKVEELIKHRDSKERELNDLKRKSASDLWKEDLAAFVEELEKVEAQEREDVLAGMVGKPIKGKVGKPKMKKLQLEETMPSPFGRRIVPQITSAMKADASRKLLKKKKGDADSVAIKMEFDEEFGGVQAEGGGDDTVNTAASGTKTPKLKREKKEPGTRVRRAPSSTKSSAKKVKKRNPWSDDESKSESDLEESEPVIIPRDSLLRRAAADRAKYTFDFSKEEDDAHDDDDANNNNDLDELKVKASPVINDREDEFVPSDSVEKDEYDFSPVKSKPSPEKMSQEKKNQDFGNIFSFPSYSQKTDDDTTKLDSDEEDSTPVFSSPFAPKQTEKMLSKTVAAKKAKVDVPPKPKRAPKAKKMETVNSDSDSEFGIPKKTAAPKGKGRGAKKRKTSGSENEGEYNPGKKAPKSTPCKKSKKAAFDQDSDVEIFQSGFASETAPKPRTGRARKEVKYFAESDEDDDFDMFN.

Residues asparagine 117, asparagine 146, serine 174 to asparagine 176, and glycine 187 to lysine 194 each bind ATP. Positions lysine 368–lysine 370 are interaction with DNA. Glutamine 402 to lysine 404 is an ATP binding site. The Toprim domain maps to cysteine 481–glutamate 598. Positions 487, 567, and 569 each coordinate Mg(2+). The 454-residue stretch at isoleucine 741–leucine 1194 folds into the Topo IIA-type catalytic domain. The active-site O-(5'-phospho-DNA)-tyrosine intermediate is tyrosine 831. Residues lysine 1016 to serine 1025 form an interaction with DNA region. 4 disordered regions span residues alanine 1115–serine 1144, lysine 1224–valine 1248, glutamate 1283–leucine 1365, and aspartate 1378–asparagine 1627. Positions asparagine 1131 to serine 1144 are enriched in low complexity. A compositionally biased stretch (polar residues) spans threonine 1296–lysine 1305. Residues proline 1339–serine 1349 show a composition bias toward basic and acidic residues. 2 stretches are compositionally biased toward acidic residues: residues lysine 1381 to alanine 1392 and arginine 1412 to aspartate 1428. Basic and acidic residues-rich tracts occupy residues proline 1436 to glutamine 1448 and lysine 1462 to aspartate 1471. Basic residues-rich tracts occupy residues glycine 1542 to threonine 1552 and lysine 1566 to lysine 1578. Residues glutamate 1616–asparagine 1627 show a composition bias toward acidic residues.

The protein belongs to the type II topoisomerase family. Homodimer. Mg(2+) is required as a cofactor. Mn(2+) serves as cofactor. The cofactor is Ca(2+).

The protein resides in the nucleus. It is found in the nucleolus. It localises to the nucleoplasm. The catalysed reaction is ATP-dependent breakage, passage and rejoining of double-stranded DNA.. In terms of biological role, key decatenating enzyme that alters DNA topology by binding to two double-stranded DNA molecules, generating a double-stranded break in one of the strands, passing the intact strand through the broken strand, and religating the broken strand. Plays a role in B-cell differentiation. The protein is DNA topoisomerase 2-beta (TOP2B) of Gallus gallus (Chicken).